The primary structure comprises 151 residues: UPF0178 protein PFL_5989 (151 aa).

Belongs to the UPF0178 family.

This Pseudomonas fluorescens (strain ATCC BAA-477 / NRRL B-23932 / Pf-5) protein is UPF0178 protein PFL_5989.